The sequence spans 462 residues: ATP synthase subunit beta 2 (462 aa).

Glycine 151–threonine 158 serves as a coordination point for ATP.

The protein belongs to the ATPase alpha/beta chains family. In terms of assembly, F-type ATPases have 2 components, CF(1) - the catalytic core - and CF(0) - the membrane proton channel. CF(1) has five subunits: alpha(3), beta(3), gamma(1), delta(1), epsilon(1). CF(0) has three main subunits: a(1), b(2) and c(9-12). The alpha and beta chains form an alternating ring which encloses part of the gamma chain. CF(1) is attached to CF(0) by a central stalk formed by the gamma and epsilon chains, while a peripheral stalk is formed by the delta and b chains.

The protein localises to the cell inner membrane. The catalysed reaction is ATP + H2O + 4 H(+)(in) = ADP + phosphate + 5 H(+)(out). In terms of biological role, produces ATP from ADP in the presence of a proton gradient across the membrane. The catalytic sites are hosted primarily by the beta subunits. The protein is ATP synthase subunit beta 2 of Chlorobaculum tepidum (strain ATCC 49652 / DSM 12025 / NBRC 103806 / TLS) (Chlorobium tepidum).